A 662-amino-acid polypeptide reads, in one-letter code: uncharacterized protein (662 aa).

Disordered stretches follow at residues 1–94 (MSQR…NENN), 107–237 (DHNN…VKYH), 288–328 (ETTS…TPSA), 406–440 (QSSF…PIQM), and 506–580 (QNSI…MVSP). A compositionally biased stretch (low complexity) spans 25-49 (TTTTTPTPTTTTTTTSSLSSSTSST). Over residues 77–87 (DNIKLDNEKTF) the composition is skewed to basic and acidic residues. Low complexity predominate over residues 109 to 161 (NNNNNNNNNNNNNNNNNNNNNNNNNNNNNNNNNNNNNNNNNNNNNNNNNNNNN). Residues 162–176 (DTQKGTNKNENNCTD) are compositionally biased toward polar residues. A compositionally biased stretch (low complexity) spans 183 to 196 (STSTTSSSETGSST). Polar residues predominate over residues 203–212 (KTPQSCLKKS). A compositionally biased stretch (low complexity) spans 213-224 (NNNNNDNNNNNN). Positions 226 to 235 (KTPRSTKKVK) are enriched in basic residues. 4 stretches are compositionally biased toward low complexity: residues 288–308 (ETTS…TPIP), 413–434 (PTNN…TTTP), 515–526 (PTKSSSSTSIQQ), and 535–575 (NINN…NNNN).

This is an uncharacterized protein from Dictyostelium discoideum (Social amoeba).